Reading from the N-terminus, the 217-residue chain is Glutathione S-transferase 1 (217 aa).

Residues 1–83 (MVMTLYKLDA…YLVSKYGADD (83 aa)) enclose the GST N-terminal domain. Glutathione-binding positions include S11, 53–55 (HTV), and 67–69 (DSH). The GST C-terminal domain occupies 89–211 (DPKKRAIVDQ…APGNDLCKDL (123 aa)).

Belongs to the GST superfamily. Theta family. Homodimer.

It carries out the reaction RX + glutathione = an S-substituted glutathione + a halide anion + H(+). Functionally, conjugation of reduced glutathione to a wide number of exogenous and endogenous hydrophobic electrophiles. This is Glutathione S-transferase 1 (GST1) from Manduca sexta (Tobacco hawkmoth).